The following is a 398-amino-acid chain: tRNA-specific 2-thiouridylase MnmA (398 aa).

ATP-binding positions include 20 to 27 and Leu-46; that span reads AMSGGVDS. Catalysis depends on Cys-114, which acts as the Nucleophile. Cysteines 114 and 210 form a disulfide. Residue Gly-138 coordinates ATP. The segment at 160 to 162 is interaction with tRNA; it reads RDQ. Catalysis depends on Cys-210, which acts as the Cysteine persulfide intermediate.

This sequence belongs to the MnmA/TRMU family.

It localises to the cytoplasm. The enzyme catalyses S-sulfanyl-L-cysteinyl-[protein] + uridine(34) in tRNA + AH2 + ATP = 2-thiouridine(34) in tRNA + L-cysteinyl-[protein] + A + AMP + diphosphate + H(+). Functionally, catalyzes the 2-thiolation of uridine at the wobble position (U34) of tRNA, leading to the formation of s(2)U34. The chain is tRNA-specific 2-thiouridylase MnmA from Brucella melitensis biotype 1 (strain ATCC 23456 / CCUG 17765 / NCTC 10094 / 16M).